The chain runs to 230 residues: Zein-alpha 19A2 (230 aa).

An N-terminal signal peptide occupies residues 1–18 (KIFCFLMLLGLSASAATA).

This sequence belongs to the zein family.

In terms of biological role, zeins are major seed storage proteins. This Zea mays (Maize) protein is Zein-alpha 19A2.